The sequence spans 284 residues: Nucleotide-binding protein Sputw3181_3461 (284 aa).

Residue 8–15 (GRSGSGKS) participates in ATP binding. 56–59 (DVRN) provides a ligand contact to GTP.

Belongs to the RapZ-like family.

Functionally, displays ATPase and GTPase activities. The polypeptide is Nucleotide-binding protein Sputw3181_3461 (Shewanella sp. (strain W3-18-1)).